Here is a 318-residue protein sequence, read N- to C-terminus: ATP synthase gamma chain (318 aa).

This sequence belongs to the ATPase gamma chain family. F-type ATPases have 2 components, CF(1) - the catalytic core - and CF(0) - the membrane proton channel. CF(1) has five subunits: alpha(3), beta(3), gamma(1), delta(1), epsilon(1). CF(0) has three main subunits: a, b and c.

It is found in the cell membrane. Functionally, produces ATP from ADP in the presence of a proton gradient across the membrane. The gamma chain is believed to be important in regulating ATPase activity and the flow of protons through the CF(0) complex. This chain is ATP synthase gamma chain, found in Lactobacillus johnsonii (strain CNCM I-12250 / La1 / NCC 533).